We begin with the raw amino-acid sequence, 323 residues long: Fructose-1,6-bisphosphatase class 1 (323 aa).

Residues Glu90, Asp111, Leu113, and Asp114 each contribute to the Mg(2+) site. Substrate is bound by residues 114-117 (DGSS), Tyr222, and Lys253. Glu259 serves as a coordination point for Mg(2+).

Belongs to the FBPase class 1 family. In terms of assembly, homotetramer. It depends on Mg(2+) as a cofactor.

It is found in the cytoplasm. The catalysed reaction is beta-D-fructose 1,6-bisphosphate + H2O = beta-D-fructose 6-phosphate + phosphate. It participates in carbohydrate biosynthesis; gluconeogenesis. In Pelobacter propionicus (strain DSM 2379 / NBRC 103807 / OttBd1), this protein is Fructose-1,6-bisphosphatase class 1.